The primary structure comprises 388 residues: MSNEFLPLCRPAIDEQDISAVADVLRSGWITTGPKSAELEESILRHTGAQHAVSLSSATAGMHLVLLVLGIGPGDEVITPSMTWVSTVNMITLLGAKPVFVDVDADNLMTDVALIEPLITERTKLIIPVHYAGASLDLDAIYDLGERYKIPVIEDAAHALGCEYKGHPIGKTGTCLFSLHAIKNVTTAEGGIFTTQDAELAARIRRLKFHGLGVDAFDRETQGRAPQAEVIEPGYKYNMPDICAVLALGQMKRIGEITQKRTELALHYRDLLTAVGGITPLSIPSYEHRHCWHLMIIRVDPLICGLNRDQLIARLKECNIGAGIHFKACHTQKYYRENYTAKFGEITKSLTNTEHNSEQICSLPLFPDMNFSDVERVVAAISEIVGNK.

K183 carries the post-translational modification N6-(pyridoxal phosphate)lysine.

This sequence belongs to the DegT/DnrJ/EryC1 family. ArnB subfamily. Homodimer. It depends on pyridoxal 5'-phosphate as a cofactor.

It catalyses the reaction UDP-4-amino-4-deoxy-beta-L-arabinose + 2-oxoglutarate = UDP-beta-L-threo-pentopyranos-4-ulose + L-glutamate. It functions in the pathway nucleotide-sugar biosynthesis; UDP-4-deoxy-4-formamido-beta-L-arabinose biosynthesis; UDP-4-deoxy-4-formamido-beta-L-arabinose from UDP-alpha-D-glucuronate: step 2/3. Its pathway is bacterial outer membrane biogenesis; lipopolysaccharide biosynthesis. Functionally, catalyzes the conversion of UDP-4-keto-arabinose (UDP-Ara4O) to UDP-4-amino-4-deoxy-L-arabinose (UDP-L-Ara4N). The modified arabinose is attached to lipid A and is required for resistance to polymyxin and cationic antimicrobial peptides. The sequence is that of UDP-4-amino-4-deoxy-L-arabinose--oxoglutarate aminotransferase from Shewanella sediminis (strain HAW-EB3).